A 152-amino-acid polypeptide reads, in one-letter code: UPF0756 membrane protein PEPE_1090 (152 aa).

4 helical membrane passes run 4-24, 52-72, 85-105, and 115-135; these read WLFL…SLII, WGVT…KIGF, WIAV…VGFL, and LVMG…GPII.

Belongs to the UPF0756 family.

It localises to the cell membrane. This chain is UPF0756 membrane protein PEPE_1090, found in Pediococcus pentosaceus (strain ATCC 25745 / CCUG 21536 / LMG 10740 / 183-1w).